A 537-amino-acid polypeptide reads, in one-letter code: ATP synthase subunit alpha (537 aa).

Residue 174–181 (GDRQTGKT) participates in ATP binding.

It belongs to the ATPase alpha/beta chains family. In terms of assembly, F-type ATPases have 2 components, CF(1) - the catalytic core - and CF(0) - the membrane proton channel. CF(1) has five subunits: alpha(3), beta(3), gamma(1), delta(1), epsilon(1). CF(0) has three main subunits: a(1), b(2) and c(9-12). The alpha and beta chains form an alternating ring which encloses part of the gamma chain. CF(1) is attached to CF(0) by a central stalk formed by the gamma and epsilon chains, while a peripheral stalk is formed by the delta and b chains.

It is found in the cell inner membrane. The catalysed reaction is ATP + H2O + 4 H(+)(in) = ADP + phosphate + 5 H(+)(out). Produces ATP from ADP in the presence of a proton gradient across the membrane. The alpha chain is a regulatory subunit. The protein is ATP synthase subunit alpha of Verminephrobacter eiseniae (strain EF01-2).